A 534-amino-acid chain; its full sequence is 26S proteasome non-ATPase regulatory subunit 3 (534 aa).

Residues methionine 1–lysine 16 are compositionally biased toward basic and acidic residues. The segment at methionine 1 to aspartate 68 is disordered. Pro residues predominate over residues proline 17–proline 32. Residue lysine 38 forms a Glycyl lysine isopeptide (Lys-Gly) (interchain with G-Cter in SUMO1); alternate linkage. Residue lysine 38 forms a Glycyl lysine isopeptide (Lys-Gly) (interchain with G-Cter in SUMO2); alternate linkage. Over residues glycine 49–glutamate 61 the composition is skewed to low complexity. A PCI domain is found at alanine 286–aspartate 465. 2 positions are modified to phosphoserine: serine 418 and serine 430. A disordered region spans residues serine 500–proline 534. The segment covering tyrosine 501–methionine 525 has biased composition (basic and acidic residues).

The protein belongs to the proteasome subunit S3 family. In terms of assembly, component of the 19S proteasome regulatory particle complex. The 26S proteasome consists of a 20S core particle (CP) and two 19S regulatory subunits (RP). The regulatory particle is made of a lid composed of 9 subunits including PSMD3, a base containing 6 ATPases and few additional components. Interacts with UBQLN1 (via ubiquitin-like domain). Interacts with ERCC6.

Functionally, component of the 26S proteasome, a multiprotein complex involved in the ATP-dependent degradation of ubiquitinated proteins. This complex plays a key role in the maintenance of protein homeostasis by removing misfolded or damaged proteins, which could impair cellular functions, and by removing proteins whose functions are no longer required. Therefore, the proteasome participates in numerous cellular processes, including cell cycle progression, apoptosis, or DNA damage repair. The chain is 26S proteasome non-ATPase regulatory subunit 3 (PSMD3) from Bos taurus (Bovine).